Reading from the N-terminus, the 143-residue chain is Hemoglobin cathodic subunit alpha (143 aa).

N-acetylserine is present on Ser2. The region spanning 2-143 (SLTAKDKSLI…LGAALSDKYR (142 aa)) is the Globin domain. His60 contributes to the O2 binding site. Residue His89 coordinates heme b.

It belongs to the globin family. In terms of assembly, heterotetramer of two alpha chains and two beta chains. Red blood cells.

In terms of biological role, involved in oxygen transport from gills to the various peripheral tissues. In Anguilla anguilla (European freshwater eel), this protein is Hemoglobin cathodic subunit alpha.